The following is a 169-amino-acid chain: MFNTRLAIFLLLIVVSLSQAKESQPFDFFEGTYDDFIDCLRINNITIEEYEKFDDTDNLDNVLKENVELKHKCNIKCQLEREPTKWLNARGEVDLKSMKATSETAVSISKCMEKAPQETCAYVYKLVICAFKSGHSVIKFDSYEQIQEETAGLIAEQQADLFDYDTIDL.

Positions 1-20 (MFNTRLAIFLLLIVVSLSQA) are cleaved as a signal peptide. 3 disulfide bridges follow: C39–C77, C73–C120, and C111–C129.

The protein belongs to the PBP/GOBP family.

Functionally, present in the aqueous fluid surrounding olfactory sensory dendrites and are thought to aid in the capture and transport of hydrophobic odorants into and through this fluid. The sequence is that of General odorant-binding protein 57a from Drosophila melanogaster (Fruit fly).